Here is an 838-residue protein sequence, read N- to C-terminus: Xyloglucanase (838 aa).

A signal peptide spans 1 to 19; the sequence is MKVSRVLALVLGAVIPAHA. Catalysis depends on aspartate 53, which acts as the Nucleophile. 2 N-linked (GlcNAc...) asparagine glycosylation sites follow: asparagine 232 and asparagine 436. Residue aspartate 469 is the Proton donor of the active site. Positions 750 to 801 are disordered; that stretch reads GTGGTSSSTKQSSSSTSSASSSTTLRSSVVSTTRASTVTSSRTSSAAGPTGS. Low complexity predominate over residues 754 to 797; that stretch reads TSSSTKQSSSSTSSASSSTTLRSSVVSTTRASTVTSSRTSSAAG. A CBM1 domain is found at 802–838; that stretch reads GVAGHYAQCGGIGWTGPTQCVAPYVCQKQNDYYYQCV.

The protein belongs to the glycosyl hydrolase 74 family.

The catalysed reaction is Hydrolysis of (1-&gt;4)-D-glucosidic linkages in xyloglucans so as to successively remove oligosaccharides from the newly-formed chain end after endo-initiation on a polymer molecule.. Its function is as follows. Hydrolyzes the glucosidic bonds of unbranched Glc residues in tamarind seed xyloglucan, producing XXXG, XLXG, XXLG and XLLG. Has a low activity against beta-glucan and carboxymethylcellulose. Not active against Avicel, laminarin, xylan, galactomannan, linear and branched arabinans, galactan, polygalacturonic acid, starch, beta-D-Glcp, beta-D-cellobiose, beta-D-Galp, beta-D-Xylp, alpha-D-Xylp, alpha-L-Araf and alpha-L-Arap. The protein is Xyloglucanase of Hypocrea jecorina (strain QM6a) (Trichoderma reesei).